A 354-amino-acid polypeptide reads, in one-letter code: MKLQTTYPSNNYPIYVEHGAIDHISTYIDQFDQSFILIDEHVNQYFADKFDDILSYENVHKVIIPAGEKTKTFEQYQETLEYILSHHVTRNTAIIAVGGGATGDFAGFIAATLLRGVHFIQVPTTILAHDSSVGGKVGINSKQGKNLIGAFYRPTAVIYDLDFLKTLPFEQILSGYAEVYKHALLNGESATQDIEQHFKDREILQSLNGMDKYIAKGIETKLDIVIADEKEQGVRKFLNLGHTFGHAVEYYHKIPHGHAVMVGIIYQFIVANALFDSKHDINHYIQYLIQLGYPLDMITDLDFETLYQYMLSDKKNDKQGVQMVLIRQFGDIVVQHVDQLTLQHACEQLKTYFK.

Residues 100 to 104 (GATGD), 124 to 125 (TT), lysine 136, lysine 145, and 163 to 166 (FLKT) contribute to the NAD(+) site. Residues glutamate 178, histidine 242, and histidine 256 each contribute to the Zn(2+) site.

Belongs to the sugar phosphate cyclases superfamily. Dehydroquinate synthase family. The cofactor is NAD(+). Co(2+) is required as a cofactor. It depends on Zn(2+) as a cofactor.

The protein localises to the cytoplasm. The catalysed reaction is 7-phospho-2-dehydro-3-deoxy-D-arabino-heptonate = 3-dehydroquinate + phosphate. The protein operates within metabolic intermediate biosynthesis; chorismate biosynthesis; chorismate from D-erythrose 4-phosphate and phosphoenolpyruvate: step 2/7. Its function is as follows. Catalyzes the conversion of 3-deoxy-D-arabino-heptulosonate 7-phosphate (DAHP) to dehydroquinate (DHQ). The chain is 3-dehydroquinate synthase from Staphylococcus aureus (strain COL).